The primary structure comprises 383 residues: tRNA(Met) cytidine acetate ligase (383 aa).

Residues 7-20, Gly-102, Asn-160, and 181-182 contribute to the ATP site; these read ISEY…HLYQ and RI.

Belongs to the TmcAL family.

It is found in the cytoplasm. The enzyme catalyses cytidine(34) in elongator tRNA(Met) + acetate + ATP = N(4)-acetylcytidine(34) in elongator tRNA(Met) + AMP + diphosphate. Its function is as follows. Catalyzes the formation of N(4)-acetylcytidine (ac(4)C) at the wobble position of elongator tRNA(Met), using acetate and ATP as substrates. First activates an acetate ion to form acetyladenylate (Ac-AMP) and then transfers the acetyl group to tRNA to form ac(4)C34. This is tRNA(Met) cytidine acetate ligase from Exiguobacterium sibiricum (strain DSM 17290 / CCUG 55495 / CIP 109462 / JCM 13490 / 255-15).